The following is a 395-amino-acid chain: Non-homologous end joining protein Ku (395 aa).

Residues 9 to 181 (ISFGLVSIPI…PPEDAAPDGD (173 aa)) enclose the Ku domain. Residues 252–395 (RAARTSRDDE…SASSRKRTSA (144 aa)) are disordered. Polar residues-rich tracts occupy residues 283–292 (SSKTSGQSSG) and 311–320 (GKTVTRSGDS). The span at 351 to 361 (TARKTTAKKTT) shows a compositional bias: basic residues. A compositionally biased stretch (low complexity) spans 362–371 (AKGTTGTTAA).

The protein belongs to the prokaryotic Ku family. Homodimer. Interacts with LigD.

Its function is as follows. With LigD forms a non-homologous end joining (NHEJ) DNA repair enzyme, which repairs dsDNA breaks with reduced fidelity. Binds linear dsDNA with 5'- and 3'- overhangs but not closed circular dsDNA nor ssDNA. Recruits and stimulates the ligase activity of LigD. The protein is Non-homologous end joining protein Ku of Streptomyces griseus subsp. griseus (strain JCM 4626 / CBS 651.72 / NBRC 13350 / KCC S-0626 / ISP 5235).